Here is a 684-residue protein sequence, read N- to C-terminus: Protein EXECUTER 1, chloroplastic (684 aa).

The span at 1–31 (MPSLSTPPSQNLAFSPAASATSSRLTPSSKR) shows a compositional bias: polar residues. Residues 1–46 (MPSLSTPPSQNLAFSPAASATSSRLTPSSKRSFYPHRLPDPTALCR) constitute a chloroplast transit peptide. The interval 1–66 (MPSLSTPPSQ…SSSSSDDNPR (66 aa)) is disordered. Positions 48–61 (SSSSGSNSSSSSSS) are enriched in low complexity. The UVR domain occupies 127–162 (DRLLSVLKSQLNRAIKREDYEDAARLKVAIAATATN). The disordered stretch occupies residues 278–318 (TLTPGRFLTSPGRKEDTGNLAVESSEDEESDNSDDDSDLLE). Positions 301–318 (SSEDEESDNSDDDSDLLE) are enriched in acidic residues.

It localises to the plastid. It is found in the chloroplast. Functionally, together with EX2, enables higher plants to perceive singlet oxygen as a stress signal in plastid that activates a genetically determined nuclear stress response program which triggers a programmed cell death (PCD). This transfer of singlet oxygen-induced stress-related signals from the plastid to the nucleus that triggers genetically controlled PCD pathway is unique to photosynthetic eukaryotes and operates under mild stress conditions, impeding photosystem II (PSII) without causing photooxidative damage of the plant. The sequence is that of Protein EXECUTER 1, chloroplastic from Arabidopsis thaliana (Mouse-ear cress).